The sequence spans 298 residues: Acetylglutamate kinase (298 aa).

Residues 69 to 70 (GG), Arg-91, and Asn-196 each bind substrate.

This sequence belongs to the acetylglutamate kinase family. ArgB subfamily.

It is found in the cytoplasm. The enzyme catalyses N-acetyl-L-glutamate + ATP = N-acetyl-L-glutamyl 5-phosphate + ADP. It functions in the pathway amino-acid biosynthesis; L-arginine biosynthesis; N(2)-acetyl-L-ornithine from L-glutamate: step 2/4. In terms of biological role, catalyzes the ATP-dependent phosphorylation of N-acetyl-L-glutamate. This chain is Acetylglutamate kinase, found in Nitrobacter winogradskyi (strain ATCC 25391 / DSM 10237 / CIP 104748 / NCIMB 11846 / Nb-255).